The following is a 404-amino-acid chain: Cysteine desulfurase IscS (404 aa).

Residues 75 to 76 (AT), Asn155, Gln183, and 203 to 205 (SSH) each bind pyridoxal 5'-phosphate. Lys206 carries the N6-(pyridoxal phosphate)lysine modification. Residue Thr243 coordinates pyridoxal 5'-phosphate. Cys328 serves as the catalytic Cysteine persulfide intermediate. Cys328 serves as a coordination point for [2Fe-2S] cluster.

Belongs to the class-V pyridoxal-phosphate-dependent aminotransferase family. NifS/IscS subfamily. Homodimer. Forms a heterotetramer with IscU, interacts with other sulfur acceptors. Pyridoxal 5'-phosphate is required as a cofactor.

The protein localises to the cytoplasm. The enzyme catalyses (sulfur carrier)-H + L-cysteine = (sulfur carrier)-SH + L-alanine. Its pathway is cofactor biosynthesis; iron-sulfur cluster biosynthesis. Functionally, master enzyme that delivers sulfur to a number of partners involved in Fe-S cluster assembly, tRNA modification or cofactor biosynthesis. Catalyzes the removal of elemental sulfur atoms from cysteine to produce alanine. Functions as a sulfur delivery protein for Fe-S cluster synthesis onto IscU, an Fe-S scaffold assembly protein, as well as other S acceptor proteins. This chain is Cysteine desulfurase IscS, found in Histophilus somni (strain 129Pt) (Haemophilus somnus).